Consider the following 628-residue polypeptide: MVAFSALSGVSAVSLLLSLVQNAHGISLKVSTQGGNSSSPILYGFMFEDINHSGDGGIYGQMLQNPGLQGTAPNLTAWAAVGDATIAIDGDSPLTSAIPSTIKLNIADDATGAVGLTNEGYWGIPVDGSEFHSSFWIKGDYSGDITVRLVGNYTGTEYGSTTITHTSTADNFTQASVKFPTTKAPDGNVLYELTVDGSVAAGSSLNFGYLTLFGETYKSRENGLKPQLANVLDDMKGSFLRFPGGNNLEGNSAENRWKWNETIGDLWDRPGREGTWTYYNTDGLGLHEYFYWCEDLGLVPVLGVWDGFALESGGNTPLTGDALTPYIDDVLNELEYILGDTSTTYGAWRAANGQEEPWNLTMVEIGNEDMLGGGCESYAERFTAFYDAIHAAYPDLILIASTSEADCLPESMPEGSWVDYHDYSTPDGLVGQFNYFDNLNRSVPYFIGEYSRWEIDWPNMKGSVAEAVFMIGFERNSDVVKMAAYAPLLQLINSTQWTPDLIGYTQSPGDIFLSTSYYVQEMFSRNRGDTIKEVTSDSDFGPLYWVASSAGDSYYMKLANYGSETQDLTVSIPGTSTGKLTVLADSDPDAYNSDTQTLVTPSESTVQASNGTFTFSLPAWAVAVLAAN.

The N-terminal stretch at 1 to 25 (MVAFSALSGVSAVSLLLSLVQNAHG) is a signal peptide. Residues asparagine 36, asparagine 51, asparagine 74, asparagine 152, asparagine 171, asparagine 260, asparagine 359, asparagine 440, asparagine 493, and asparagine 610 are each glycosylated (N-linked (GlcNAc...) asparagine).

The protein belongs to the glycosyl hydrolase 51 family.

The protein resides in the secreted. The enzyme catalyses Hydrolysis of terminal non-reducing alpha-L-arabinofuranoside residues in alpha-L-arabinosides.. It functions in the pathway glycan metabolism; L-arabinan degradation. Functionally, alpha-L-arabinofuranosidase involved in the degradation of arabinoxylan, a major component of plant hemicellulose. Acts only on small linear 1,5-alpha-linked L-arabinofuranosyl oligosaccharides. This is Probable alpha-L-arabinofuranosidase A (abfA) from Aspergillus niger (strain ATCC MYA-4892 / CBS 513.88 / FGSC A1513).